Consider the following 92-residue polypeptide: C-C motif chemokine 4 (92 aa).

A signal peptide spans 1-23 (MKLCVTVLSLLVLVAAFCSPALS). 2 cysteine pairs are disulfide-bonded: Cys34-Cys58 and Cys35-Cys74.

It belongs to the intercrine beta (chemokine CC) family. In terms of assembly, homodimer. Interacts with CCR5.

It is found in the secreted. Functionally, monokine with inflammatory and chemokinetic properties. In Canis lupus familiaris (Dog), this protein is C-C motif chemokine 4 (CCL4).